A 220-amino-acid polypeptide reads, in one-letter code: ATP-dependent Clp protease proteolytic subunit (220 aa).

Serine 122 functions as the Nucleophile in the catalytic mechanism. Residue histidine 147 is part of the active site.

This sequence belongs to the peptidase S14 family. In terms of assembly, fourteen ClpP subunits assemble into 2 heptameric rings which stack back to back to give a disk-like structure with a central cavity, resembling the structure of eukaryotic proteasomes.

Its subcellular location is the cytoplasm. The catalysed reaction is Hydrolysis of proteins to small peptides in the presence of ATP and magnesium. alpha-casein is the usual test substrate. In the absence of ATP, only oligopeptides shorter than five residues are hydrolyzed (such as succinyl-Leu-Tyr-|-NHMec, and Leu-Tyr-Leu-|-Tyr-Trp, in which cleavage of the -Tyr-|-Leu- and -Tyr-|-Trp bonds also occurs).. Cleaves peptides in various proteins in a process that requires ATP hydrolysis. Has a chymotrypsin-like activity. Plays a major role in the degradation of misfolded proteins. The polypeptide is ATP-dependent Clp protease proteolytic subunit (Colwellia psychrerythraea (strain 34H / ATCC BAA-681) (Vibrio psychroerythus)).